The following is a 543-amino-acid chain: Zinc finger protein tra-4 (543 aa).

A disordered region spans residues Met-1–Gly-38. Basic and acidic residues predominate over residues Lys-10 to Pro-20. 7 consecutive C2H2-type zinc fingers follow at residues Val-218–His-241, Pro-327–His-350, Tyr-381–His-406, Phe-413–His-436, Phe-442–His-464, Phe-470–His-493, and Tyr-495–His-518.

It belongs to the krueppel C2H2-type zinc-finger protein family. Interacts with histone deacetylase hda-1. May interact with nasp-1.

It is found in the nucleus. Probable transcription factor. Promotes normal hermaphrodite (XX) development, in concert with histone deacetylase hda-1 and nasp-1, perhaps as components of a complex. May cooperate with transcription factor tra-1 to repress male-specific genes in hermaphrodites. Synthetic multivulva (synMuv) class B protein, required to repress the induction of vulval development by let-60 Ras signaling. The protein is Zinc finger protein tra-4 of Caenorhabditis elegans.